A 185-amino-acid polypeptide reads, in one-letter code: Ribosome-recycling factor (185 aa).

This sequence belongs to the RRF family.

It localises to the cytoplasm. Responsible for the release of ribosomes from messenger RNA at the termination of protein biosynthesis. May increase the efficiency of translation by recycling ribosomes from one round of translation to another. This Aromatoleum aromaticum (strain DSM 19018 / LMG 30748 / EbN1) (Azoarcus sp. (strain EbN1)) protein is Ribosome-recycling factor.